The sequence spans 453 residues: Tol-Pal system protein TolB (453 aa).

The signal sequence occupies residues 1-39; that stretch reads MSFIPNTEAEALSALFSRRSVLGATAAGGLLATPLAAFA.

The protein belongs to the TolB family. In terms of assembly, the Tol-Pal system is composed of five core proteins: the inner membrane proteins TolA, TolQ and TolR, the periplasmic protein TolB and the outer membrane protein Pal. They form a network linking the inner and outer membranes and the peptidoglycan layer.

The protein resides in the periplasm. Part of the Tol-Pal system, which plays a role in outer membrane invagination during cell division and is important for maintaining outer membrane integrity. This Gluconobacter oxydans (strain 621H) (Gluconobacter suboxydans) protein is Tol-Pal system protein TolB.